The following is a 359-amino-acid chain: GATA-binding factor 1-A (359 aa).

The tract at residues 1-21 is disordered; that stretch reads MDYTTLTTQDPDPNYTESGLA. 2 consecutive GATA-type zinc fingers follow at residues 178-202 and 232-256; these read CVNC…CNAC and CSNC…CNAC. Disordered stretches follow at residues 271 to 311 and 323 to 359; these read MKKE…SPYP and PMGH…VTPP. Basic residues predominate over residues 279 to 291; the sequence is RNRKVSSRSKKKK.

Expressed in the developing ventral blood island, and in both tadpole and adult erythrocytes.

It localises to the nucleus. Transcription factor that acts synergistically with tal1/scl and lmo2 to specify embryonic dorsal mesoderm to a hematopoietic fate. The polypeptide is GATA-binding factor 1-A (gata1-a) (Xenopus laevis (African clawed frog)).